Consider the following 376-residue polypeptide: tRNA-specific 2-thiouridylase MnmA (376 aa).

ATP-binding positions include 17–24 and M43; that span reads GMSGGVDS. The interaction with target base in tRNA stretch occupies residues 103 to 105; that stretch reads NPD. C108 functions as the Nucleophile in the catalytic mechanism. A disulfide bond links C108 and C204. G132 provides a ligand contact to ATP. An interaction with tRNA region spans residues 154–156; it reads KDQ. Residue C204 is the Cysteine persulfide intermediate of the active site. Positions 316–317 are interaction with tRNA; that stretch reads RY.

Belongs to the MnmA/TRMU family.

The protein localises to the cytoplasm. It catalyses the reaction S-sulfanyl-L-cysteinyl-[protein] + uridine(34) in tRNA + AH2 + ATP = 2-thiouridine(34) in tRNA + L-cysteinyl-[protein] + A + AMP + diphosphate + H(+). Functionally, catalyzes the 2-thiolation of uridine at the wobble position (U34) of tRNA, leading to the formation of s(2)U34. The protein is tRNA-specific 2-thiouridylase MnmA of Pseudomonas savastanoi pv. phaseolicola (strain 1448A / Race 6) (Pseudomonas syringae pv. phaseolicola (strain 1448A / Race 6)).